A 633-amino-acid chain; its full sequence is Biosynthetic arginine decarboxylase (633 aa).

N6-(pyridoxal phosphate)lysine is present on lysine 101. Residue 284–294 participates in substrate binding; that stretch reads VDVGGGLGVDY.

It belongs to the Orn/Lys/Arg decarboxylase class-II family. SpeA subfamily. Mg(2+) is required as a cofactor. Pyridoxal 5'-phosphate serves as cofactor.

It catalyses the reaction L-arginine + H(+) = agmatine + CO2. The protein operates within amine and polyamine biosynthesis; agmatine biosynthesis; agmatine from L-arginine: step 1/1. In terms of biological role, catalyzes the biosynthesis of agmatine from arginine. The protein is Biosynthetic arginine decarboxylase of Aeromonas hydrophila subsp. hydrophila (strain ATCC 7966 / DSM 30187 / BCRC 13018 / CCUG 14551 / JCM 1027 / KCTC 2358 / NCIMB 9240 / NCTC 8049).